The sequence spans 379 residues: Homoserine O-succinyltransferase (379 aa).

The AB hydrolase-1 domain occupies Asn-51–Leu-360. Ser-157 (nucleophile) is an active-site residue. Position 227 (Arg-227) interacts with substrate. Residues Asp-323 and His-356 contribute to the active site. Asp-357 is a substrate binding site.

This sequence belongs to the AB hydrolase superfamily. MetX family. In terms of assembly, homodimer.

It is found in the cytoplasm. The catalysed reaction is L-homoserine + succinyl-CoA = O-succinyl-L-homoserine + CoA. The protein operates within amino-acid biosynthesis; L-methionine biosynthesis via de novo pathway; O-succinyl-L-homoserine from L-homoserine: step 1/1. In terms of biological role, transfers a succinyl group from succinyl-CoA to L-homoserine, forming succinyl-L-homoserine. In Pseudomonas putida (strain GB-1), this protein is Homoserine O-succinyltransferase.